Here is a 303-residue protein sequence, read N- to C-terminus: Nod factor export ATP-binding protein I (303 aa).

The ABC transporter domain maps to 5–235 (LQMRNVRKLY…EIGCDVVEVY (231 aa)). 37–44 (GPNGAGKT) serves as a coordination point for ATP.

It belongs to the ABC transporter superfamily. Lipooligosaccharide exporter (TC 3.A.1.102) family. In terms of assembly, the complex is composed of two ATP-binding proteins (NodI) and two transmembrane proteins (NodJ).

Its subcellular location is the cell inner membrane. Functionally, part of the ABC transporter complex NodIJ involved in the export of the nodulation factors (Nod factors), the bacterial signal molecules that induce symbiosis and subsequent nodulation induction. Nod factors are LCO (lipo-chitin oligosaccharide), a modified beta-1,4-linked N-acetylglucosamine oligosaccharide. This subunit is responsible for energy coupling to the transport system. The sequence is that of Nod factor export ATP-binding protein I from Cupriavidus metallidurans (strain ATCC 43123 / DSM 2839 / NBRC 102507 / CH34) (Ralstonia metallidurans).